A 325-amino-acid chain; its full sequence is Glutarate 2-hydroxylase (325 aa).

3 residues coordinate Fe cation: His160, Asp162, and His292.

The protein belongs to the glutarate hydroxylase family. In terms of assembly, homotetramer. Requires Fe(2+) as cofactor.

The enzyme catalyses glutarate + 2-oxoglutarate + O2 = (S)-2-hydroxyglutarate + succinate + CO2. It participates in amino-acid degradation. Acts as an alpha-ketoglutarate-dependent dioxygenase catalyzing hydroxylation of glutarate (GA) to L-2-hydroxyglutarate (L2HG). Functions in a L-lysine degradation pathway that proceeds via cadaverine, glutarate and L-2-hydroxyglutarate. The polypeptide is Glutarate 2-hydroxylase (Escherichia coli (strain 55989 / EAEC)).